A 291-amino-acid polypeptide reads, in one-letter code: Acetylglutamate kinase (291 aa).

Residues 61-62, R83, and N187 contribute to the substrate site; that span reads GG.

The protein belongs to the acetylglutamate kinase family. ArgB subfamily.

It localises to the cytoplasm. The enzyme catalyses N-acetyl-L-glutamate + ATP = N-acetyl-L-glutamyl 5-phosphate + ADP. It functions in the pathway amino-acid biosynthesis; L-arginine biosynthesis; N(2)-acetyl-L-ornithine from L-glutamate: step 2/4. Its function is as follows. Catalyzes the ATP-dependent phosphorylation of N-acetyl-L-glutamate. The protein is Acetylglutamate kinase of Methanoregula boonei (strain DSM 21154 / JCM 14090 / 6A8).